We begin with the raw amino-acid sequence, 175 residues long: Protein UPS1, mitochondrial (175 aa).

Positions 1–80 (MVLLHKSTHI…RGITETWIIE (80 aa)) are required for mitochondrial targeting. The PRELI/MSF1 domain maps to 2–172 (VLLHKSTHIF…VIQKLEEARN (171 aa)). A 1,2-diacyl-sn-glycero-3-phosphate is bound by residues Y26, K58, K148, and N152.

Belongs to the slowmo family. Interacts with MDM35. Found associated with a 170 kDa complex.

The protein resides in the mitochondrion inner membrane. It localises to the mitochondrion intermembrane space. Required for maintenance of normal mitochondrial morphology. Required for PCP1-dependent processing of MGM1. The UPS1:MDM35 complex mediates the transfer of phosphatidic acid (PA) between liposomes and probably functions as a PA transporter across the mitochondrion intermembrane space. Phosphatidic acid release requires dissociation of the UPS1:MDM35 complex. Phosphatidic acid import is required for cardiolipin (CL) synthesis in the mitochondrial inner membrane. With UPS2, controls the level of cardiolipin in mitochondria. Cardiolipin is a unique phospholipid with four fatty acid chains and is present mainly in the mitochondrial inner membrane where it stabilizes the electron transport chain supercomplex between complexes III and IV through direct interaction of their subunits. This chain is Protein UPS1, mitochondrial (UPS1), found in Saccharomyces cerevisiae (strain ATCC 204508 / S288c) (Baker's yeast).